A 258-amino-acid polypeptide reads, in one-letter code: NAD-dependent protein deacylase (258 aa).

One can recognise a Deacetylase sirtuin-type domain in the interval 3 to 258 (ERQLEKSIEH…LPALMRGLSA (256 aa)). 28 to 48 (GAGMSADSGLETYRDDKTGLW) lines the NAD(+) pocket. Substrate-binding residues include Y73 and R76. Position 109-112 (109-112 (QNID)) interacts with NAD(+). The active-site Proton acceptor is the H127. Zn(2+) is bound by residues C135, C138, C161, and C164. NAD(+)-binding positions include 201–203 (GTS) and A245.

This sequence belongs to the sirtuin family. Class III subfamily. Requires Zn(2+) as cofactor.

Its subcellular location is the cytoplasm. It catalyses the reaction N(6)-acetyl-L-lysyl-[protein] + NAD(+) + H2O = 2''-O-acetyl-ADP-D-ribose + nicotinamide + L-lysyl-[protein]. It carries out the reaction N(6)-succinyl-L-lysyl-[protein] + NAD(+) + H2O = 2''-O-succinyl-ADP-D-ribose + nicotinamide + L-lysyl-[protein]. Functionally, NAD-dependent lysine deacetylase and desuccinylase that specifically removes acetyl and succinyl groups on target proteins. Modulates the activities of several proteins which are inactive in their acylated form. This chain is NAD-dependent protein deacylase, found in Corynebacterium glutamicum (strain ATCC 13032 / DSM 20300 / JCM 1318 / BCRC 11384 / CCUG 27702 / LMG 3730 / NBRC 12168 / NCIMB 10025 / NRRL B-2784 / 534).